The sequence spans 433 residues: Keratin, type I cytoskeletal 47 kDa (433 aa).

A head region spans residues 1-73; that stretch reads MSYSTRSISQ…AFNVSVTSNN (73 aa). A coil 1A region spans residues 74–109; sequence GKETMQNLNDRLANYLDRVRSLEQANHELELKIREY. Positions 74–385 constitute an IF rod domain; that stretch reads GKETMQNLND…RLLEGEDTRF (312 aa). The interval 110–127 is linker 1; the sequence is LDKKAAVGSLDYSGYYNT. The interval 128–219 is coil 1B; sequence INLLRSQIND…KNHEEELAVV (92 aa). Positions 220-242 are linker 12; that stretch reads RSSARGNVDVQVDSAPPVDLAQI. Residues 243–381 form a coil 2 region; sequence MADVRSQYES…ATYRRLLEGE (139 aa). Positions 382–433 are tail; it reads DTRFSQTETQKAVTIVSKEQSSSSIKKVKTVIEEVVDGKVVSSRVEELTETS.

Belongs to the intermediate filament family. Heterotetramer of two type I and two type II keratins.

This Xenopus laevis (African clawed frog) protein is Keratin, type I cytoskeletal 47 kDa (xk70a).